The chain runs to 257 residues: Tryptophan synthase alpha chain (257 aa).

Residues Glu44 and Asp55 each act as proton acceptor in the active site.

This sequence belongs to the TrpA family. In terms of assembly, tetramer of two alpha and two beta chains.

The catalysed reaction is (1S,2R)-1-C-(indol-3-yl)glycerol 3-phosphate + L-serine = D-glyceraldehyde 3-phosphate + L-tryptophan + H2O. It participates in amino-acid biosynthesis; L-tryptophan biosynthesis; L-tryptophan from chorismate: step 5/5. The alpha subunit is responsible for the aldol cleavage of indoleglycerol phosphate to indole and glyceraldehyde 3-phosphate. This Chlamydia caviae (strain ATCC VR-813 / DSM 19441 / 03DC25 / GPIC) (Chlamydophila caviae) protein is Tryptophan synthase alpha chain.